The following is a 206-amino-acid chain: MAKIIGISGGSGSGKTTVVSKISEFIPEFVLISQDNYYKSVGDYEHEFSKVNFDHPDAFDNNLFYEHLKNLKKNSPIDMPLYDFINHKRQLKTVLVVPTPVVIVEGIMIFVEERVRNLIDLKIYIDTPNDIRFIRRLRRDISKRGRTVESVIDQYLNTTRWGYYRFIEPTKEYADLIIPEGGHNDKALYVLSTFLKSLSKEGLDFT.

An ATP-binding site is contributed by 9–16 (GGSGSGKT).

It belongs to the uridine kinase family. As to quaternary structure, monomer.

The protein resides in the cytoplasm. It carries out the reaction uridine + ATP = UMP + ADP + H(+). The catalysed reaction is cytidine + ATP = CMP + ADP + H(+). It functions in the pathway pyrimidine metabolism; CTP biosynthesis via salvage pathway; CTP from cytidine: step 1/3. It participates in pyrimidine metabolism; UMP biosynthesis via salvage pathway; UMP from uridine: step 1/1. This chain is Uridine kinase (udk), found in Borreliella burgdorferi (strain ATCC 35210 / DSM 4680 / CIP 102532 / B31) (Borrelia burgdorferi).